The chain runs to 283 residues: 32 kDa beta-galactoside-binding lectin (283 aa).

Galectin domains are found at residues 17–148 and 156–283; these read YRSL…VHWG and YESG…IQIQ. 217 to 223 contacts a beta-D-galactoside; sequence WGNEERE.

As to quaternary structure, (Microbial infection) Interacts (via domain galectin 2) with goat TMEM147. Interacts (via domain galectin 1) with goat TMEM63A.

The protein localises to the membrane. Its function is as follows. Binds galactose. Exerts immunomodulatory effects on host peripheral blood mononuclear cells to down-regulate host immune response. Hemagglutinates human, dog, rabbit, chicken and mouse erythrocytes but does not hemagglutinate the erythrocytes of goat, its natural host. The chain is 32 kDa beta-galactoside-binding lectin (GAL-1) from Haemonchus contortus (Barber pole worm).